The chain runs to 705 residues: Polyribonucleotide nucleotidyltransferase (705 aa).

Positions 486 and 492 each coordinate Mg(2+). The region spanning 553–612 (PRIYTMKINPEKIKDVIGKGGSVIRALTDETGTTIEIEDDGTIKIAATDGDKAKHAIRRI) is the KH domain. The 69-residue stretch at 622 to 690 (GRIYAGKVTR…RQGRIRLSIK (69 aa)) folds into the S1 motif domain.

Belongs to the polyribonucleotide nucleotidyltransferase family. In terms of assembly, component of the RNA degradosome, which is a multiprotein complex involved in RNA processing and mRNA degradation. Requires Mg(2+) as cofactor.

It localises to the cytoplasm. It catalyses the reaction RNA(n+1) + phosphate = RNA(n) + a ribonucleoside 5'-diphosphate. Functionally, involved in mRNA degradation. Catalyzes the phosphorolysis of single-stranded polyribonucleotides processively in the 3'- to 5'-direction. The chain is Polyribonucleotide nucleotidyltransferase from Yersinia pestis bv. Antiqua (strain Nepal516).